The chain runs to 239 residues: Large ribosomal subunit protein uL2 (239 aa).

The segment at 200 to 239 (VNHPHGGKEHHIGRPSTVSRRAPPGRKVGHIAARRTGRRK) is disordered. Over residues 222-239 (PPGRKVGHIAARRTGRRK) the composition is skewed to basic residues.

The protein belongs to the universal ribosomal protein uL2 family. As to quaternary structure, part of the 50S ribosomal subunit. Forms a bridge to the 30S subunit in the 70S ribosome.

In terms of biological role, one of the primary rRNA binding proteins. Required for association of the 30S and 50S subunits to form the 70S ribosome, for tRNA binding and peptide bond formation. It has been suggested to have peptidyltransferase activity; this is somewhat controversial. Makes several contacts with the 16S rRNA in the 70S ribosome. The sequence is that of Large ribosomal subunit protein uL2 from Thermococcus kodakarensis (strain ATCC BAA-918 / JCM 12380 / KOD1) (Pyrococcus kodakaraensis (strain KOD1)).